The primary structure comprises 61 residues: Metallothionein-2B (61 aa).

Met1 carries the N-acetylmethionine modification. The beta stretch occupies residues Met1 to Cys29. 20 residues coordinate a divalent metal cation: Cys5, Cys7, Cys13, Cys15, Cys19, Cys21, Cys24, Cys26, Cys29, Cys33, Cys34, Cys36, Cys37, Cys41, Cys44, Cys48, Cys50, Cys57, Cys59, and Cys60. The alpha stretch occupies residues Lys30–Ala61.

The protein belongs to the metallothionein superfamily. Type 1 family. Monomer.

Functionally, metallothioneins have a high content of cysteine residues that bind various heavy metals; these proteins are transcriptionally regulated by both heavy metals and glucocorticoids. In Sus scrofa (Pig), this protein is Metallothionein-2B (MT2B).